Consider the following 80-residue polypeptide: Large ribosomal subunit protein uL24 (80 aa).

The protein belongs to the universal ribosomal protein uL24 family. In terms of assembly, part of the 50S ribosomal subunit.

One of two assembly initiator proteins, it binds directly to the 5'-end of the 23S rRNA, where it nucleates assembly of the 50S subunit. In terms of biological role, one of the proteins that surrounds the polypeptide exit tunnel on the outside of the subunit. This is Large ribosomal subunit protein uL24 from Chlorobium phaeovibrioides (strain DSM 265 / 1930) (Prosthecochloris vibrioformis (strain DSM 265)).